The following is an 801-amino-acid chain: MEASGKLICRQRQVLFSFLLLGLSLAGAAEPRSYSVVEETEGSSFVTNLAKDLGLEQREFSRRGVRVVSRGNKLHLQLNQETADLLLNEKLDREDLCGHTEPCVLRFQVLLESPFEFFQAELQVIDINDHSPVFLDKQMLVKVSESSPPGTAFPLKNAEDLDIGQNNIENYIISPNSYFRVLTRKRSDGRKYPELVLDKALDREEEAELRLTLTALDGGSPPRSGTAQVYIEVVDVNDNAPEFEQPFYRVQISEDSPISFLVVKVSATDVDTGVNGEISYSLFQASDEISKTFKVDFLTGEIRLKKQLDFEKFQSYEVNIEARDAGGFSGKCTVLIQVIDVNDHAPEVTMSAFTSPIPENAPETVVALFSVSDLDSGENGKISCSIQEDLPFLLKSSVGNFYTLLTETPLDRESRAEYNVTITVTDLGTPRLTTHLNMTVLVSDVNDNAPAFTQTSYTLFVRENNSPALHIGSVSATDRDSGTNAQVTYSLLPPQDPHLPLASLVSINTDNGHLFALRSLDYEALQAFEFRVGASDRGSPALSSEALVRVLVLDANDNSPFVLYPLQNGSAPCTELVPRAAEPGYLVTKVVAVDGDSGQNAWLSYQLLKATEPGLFGVWAHNGEVRTARLLSERDAAKQRLVVLVKDNGEPPCSATATLHVLLVDGFSQPYLPLPEAAPAQGQADSLTVYLVVALASVSSLFLFSVLLFVAVLLCRRSRAASVGRCSVPEGPFPGHLVDVRGTGSLSQNYQYEVCLAGGSGTNEFQLLKPVLPNIQGHSFGPEMEQNSNFRNGFGFSLQLK.

A signal peptide spans 1 to 29; sequence MEASGKLICRQRQVLFSFLLLGLSLAGAA. Topologically, residues 30-691 are extracellular; that stretch reads EPRSYSVVEE…GQADSLTVYL (662 aa). Cadherin domains are found at residues 36–134, 139–243, 248–348, 353–452, and 457–562; these read VVEE…SPVF, MLVK…APEF, YRVQ…APEV, FTSP…APAF, and YTLF…SPFV. C97 and C103 are joined by a disulfide. Residues N419 and N437 are each glycosylated (N-linked (GlcNAc...) asparagine). The N-linked (GlcNAc...) asparagine glycan is linked to N568. In terms of domain architecture, Cadherin 6 spans 569 to 672; the sequence is GSAPCTELVP…LVDGFSQPYL (104 aa). The chain crosses the membrane as a helical span at residues 692 to 710; that stretch reads VVALASVSSLFLFSVLLFV. The Cytoplasmic portion of the chain corresponds to 711–801; sequence AVLLCRRSRA…NGFGFSLQLK (91 aa).

In terms of assembly, forms homodimers in trans (molecules expressed by two different cells). Forms promiscuous heterodimers in cis (at the plasma membrane of the same cell) with other protocadherins.

Its subcellular location is the cell membrane. Its function is as follows. Calcium-dependent cell-adhesion protein involved in cells self-recognition and non-self discrimination. Thereby, it is involved in the establishment and maintenance of specific neuronal connections in the brain. The chain is Protocadherin beta-8 from Homo sapiens (Human).